The primary structure comprises 214 residues: Adenylate kinase (214 aa).

10 to 15 (GTGKGT) is an ATP binding site. Positions 30–59 (STGDILRENIQKKNTIGKKIHNILKNGELV) are NMP. AMP contacts are provided by residues threonine 31, arginine 36, 57 to 59 (ELV), 85 to 88 (GFPR), and glutamine 92. The tract at residues 122-159 (GRRVHTPSGRIYNINYNPPREEGKDDLTQEKLTIREDD) is LID. Residues arginine 123 and 132–133 (IY) contribute to the ATP site. AMP-binding residues include arginine 156 and arginine 167. Glutamine 200 serves as a coordination point for ATP.

This sequence belongs to the adenylate kinase family. In terms of assembly, monomer.

It localises to the cytoplasm. The catalysed reaction is AMP + ATP = 2 ADP. It functions in the pathway purine metabolism; AMP biosynthesis via salvage pathway; AMP from ADP: step 1/1. In terms of biological role, catalyzes the reversible transfer of the terminal phosphate group between ATP and AMP. Plays an important role in cellular energy homeostasis and in adenine nucleotide metabolism. The sequence is that of Adenylate kinase from Buchnera aphidicola subsp. Schizaphis graminum (strain Sg).